The sequence spans 2513 residues: Highly reducing polyketide synthase ACRTS2 (2513 aa).

The region spanning 4–429 (DTPVAIIGVS…GSSSAVIIDR (426 aa)) is the Ketosynthase family 3 (KS3) domain. Active-site for beta-ketoacyl synthase activity residues include C174, H313, and H353. A malonyl-CoA:ACP transacylase (MAT) domain region spans residues 547-875 (VFTGQGAQYA…NYLPSLLRGT (329 aa)). S635 functions as the For malonyltransferase activity in the catalytic mechanism. Residues 942–1074 (HALIGRKAPS…GKIEPEIADL (133 aa)) are N-terminal hotdog fold. A dehydratase (DH) domain region spans residues 942-1253 (HALIGRKAPS…TFRTVSSADD (312 aa)). The region spanning 942–1254 (HALIGRKAPS…FRTVSSADDQ (313 aa)) is the PKS/mFAS DH domain. Residue H974 is the Proton acceptor; for dehydratase activity of the active site. The C-terminal hotdog fold stretch occupies residues 1092-1254 (AGVIEHDMDN…FRTVSSADDQ (163 aa)). D1161 serves as the catalytic Proton donor; for dehydratase activity. A methyltransferase (CMet) domain region spans residues 1407-1600 (SKIIGYLTEN…IPTNYRTDNP (194 aa)). The interval 1816–2127 (GSPDTIYFRR…SRDHIGRLVV (312 aa)) is enoylreductase (ER) domain. The tract at residues 2152–2327 (ATYLVAGGTR…YTVSIGLPVV (176 aa)) is ketoreductase (KR) domain. One can recognise a Carrier domain in the interval 2433–2510 (DPLTGLIEAL…ALAVNILAQR (78 aa)). S2470 carries the O-(pantetheine 4'-phosphoryl)serine modification.

It functions in the pathway mycotoxin biosynthesis. Highly reducing polyketide synthase; part of the gene cluster that mediates the biosynthesis of the host-selective toxins (HSTs) ACR-toxins responsible for brown spot of rough lemon disease by the rough lemon pathotype. ACR-toxins cause uncoupling of mitochondrial oxidative-phosphorylation similar to that of classic protonophore. The structure of the major form of ACR-toxin (ACR-toxin I) consists of an alpha-dihydropyrone ring in a 19-carbon polyalcohol, a typical polyketide structure. Minor toxins were characterized as having a pyrone ring with polyalcohol side chains different in length and showing weaker toxicity. The highly reducing polyketide synthase ACRTS2 has all necessary enzymatic domains for multiple cycles of condensation and beta-keto processing. The cytochrome P450 monooxygenase ACRTS1 has also been shown to be essential for ACR-toxin biosynthesis, however its exact role in the pathway has not been elucidated yet. This is Highly reducing polyketide synthase ACRTS2 from Alternaria alternata (Alternaria rot fungus).